The sequence spans 286 residues: Beta-lactamase SHV-2 (286 aa).

A signal peptide spans 1-21; it reads MRYIRLCIISLLATLPLAVHA. Residue S66 is the Acyl-ester intermediate of the active site. The cysteines at positions 73 and 119 are disulfide-linked. Catalysis depends on E164, which acts as the Proton acceptor. 230–232 is a substrate binding site; the sequence is KTG.

This sequence belongs to the class-A beta-lactamase family.

The catalysed reaction is a beta-lactam + H2O = a substituted beta-amino acid. Functionally, this enzyme hydrolyzes cefotaxime, ceftazidime and other broad spectrum cephalosporins. In Escherichia coli, this protein is Beta-lactamase SHV-2 (bla).